Here is an 811-residue protein sequence, read N- to C-terminus: Ribonucleoside-diphosphate reductase large chain (811 aa).

The region spanning 1–92 (MFVYKRDGRQ…VSNLHKQTEK (92 aa)) is the ATP-cone domain. Residues 5-6 (KR), 11-17 (EKVAFDK), threonine 53, and aspartate 57 each bind ATP. Residues serine 202 and serine 217 each coordinate GDP. Cysteine 218 and cysteine 444 are oxidised to a cystine. Residues 226–228 (DSI), lysine 243, arginine 256, and 263–264 (AG) each bind dTTP. Asparagine 427 lines the GDP pocket. Asparagine 427 acts as the Proton acceptor in catalysis. Cysteine 429 serves as the catalytic Cysteine radical intermediate. GDP is bound by residues glutamate 431 and 603 to 606 (TAST). The active-site Proton acceptor is glutamate 431.

Belongs to the ribonucleoside diphosphate reductase large chain family. Heterodimer of a large and a small subunit. Interacts with SPD1.

The catalysed reaction is a 2'-deoxyribonucleoside 5'-diphosphate + [thioredoxin]-disulfide + H2O = a ribonucleoside 5'-diphosphate + [thioredoxin]-dithiol. Its activity is regulated as follows. Under complex allosteric control mediated by deoxynucleoside triphosphates and ATP binding to separate specificity and activation sites on the large subunit. The type of nucleotide bound at the specificity site determines substrate preference. It seems probable that ATP makes the enzyme reduce CDP and UDP, dGTP favors ADP reduction and dTTP favors GDP reduction. Stimulated by ATP and inhibited by dATP binding to the activity site. Functionally, provides the precursors necessary for DNA synthesis. Catalyzes the biosynthesis of deoxyribonucleotides from the corresponding ribonucleotides. The polypeptide is Ribonucleoside-diphosphate reductase large chain (cdc22) (Schizosaccharomyces pombe (strain 972 / ATCC 24843) (Fission yeast)).